Here is a 163-residue protein sequence, read N- to C-terminus: MFRRLIGVVVATALLTFQLIVGSATALELDEATRTVPLNAQGDTVTLSLKQVKEGKRLFQYACAQCHVGGVTKTNQNVGLEPEALALATPNRNNIEGLVDYMKNPTTYDGVEEISEIHPSLKSADIFTAMRNLTDKDLESIAGHILLQPKILGDKWGGGKIYY.

Residues 1–26 form the signal peptide; sequence MFRRLIGVVVATALLTFQLIVGSATA. The heme c site is built by Cys63, Cys66, His67, and His118.

This sequence belongs to the cytochrome c family. PsbV subfamily. PSII is composed of 1 copy each of membrane proteins PsbA, PsbB, PsbC, PsbD, PsbE, PsbF, PsbH, PsbI, PsbJ, PsbK, PsbL, PsbM, PsbT, PsbX, PsbY, PsbZ, Psb30/Ycf12, peripheral proteins PsbO, CyanoQ (PsbQ), PsbU, PsbV and a large number of cofactors. It forms dimeric complexes. Requires heme c as cofactor.

Its subcellular location is the cellular thylakoid membrane. In terms of biological role, one of the extrinsic, lumenal subunits of photosystem II (PSII). PSII is a light-driven water plastoquinone oxidoreductase, using light energy to abstract electrons from H(2)O, generating a proton gradient subsequently used for ATP formation. The extrinsic proteins stabilize the structure of photosystem II oxygen-evolving complex (OEC), the ion environment of oxygen evolution and protect the OEC against heat-induced inactivation. Low-potential cytochrome c that plays a role in the OEC of PSII. This chain is Photosystem II extrinsic protein V, found in Nostoc sp. (strain PCC 7120 / SAG 25.82 / UTEX 2576).